Reading from the N-terminus, the 398-residue chain is Cytochrome b561 and DOMON domain-containing protein At3g61750 (398 aa).

Residues 1 to 23 form the signal peptide; that stretch reads MKTLVGFYILCFLIGQDLPFLAA. A DOMON domain is found at 64–177; the sequence is NTFVLRYSEN…PRRAVILAFS (114 aa). Residues 184–377 form the Cytochrome b561 domain; the sequence is LGRLTKHDDK…LEIFRIRGTI (194 aa). Histidine 220 is a binding site for heme b. 2 helical membrane passes run 222–242 and 252–272; these read VMAI…ARYL and LHIG…ILGI. Positions 253 and 285 each coordinate heme b. 3 helical membrane-spanning segments follow: residues 287 to 307, 320 to 340, and 351 to 371; these read GIGI…FARP, YHHW…VLGI, and KIGY…LEIF. Histidine 321 provides a ligand contact to heme b.

It depends on heme b as a cofactor.

Its subcellular location is the membrane. In terms of biological role, may act as a catecholamine-responsive trans-membrane electron transporter. The chain is Cytochrome b561 and DOMON domain-containing protein At3g61750 from Arabidopsis thaliana (Mouse-ear cress).